The chain runs to 1942 residues: Myosin-1 (1942 aa).

Positions Asp-33–Pro-82 constitute a Myosin N-terminal SH3-like domain. Ser-36 carries the post-translational modification Phosphoserine. Residues Thr-64 and Thr-69 each carry the phosphothreonine modification. A Myosin motor domain is found at Asp-86 to Asp-785. Lys-130 is modified (N6,N6,N6-trimethyllysine). An ATP-binding site is contributed by Gly-179–Thr-186. Tyr-389 is modified (phosphotyrosine). Thr-419 carries the phosphothreonine modification. Position 424 is a phosphotyrosine (Tyr-424). At Ser-625 the chain carries Phosphoserine. An actin-binding region spans residues Leu-662–Glu-684. Residue His-760 is modified to Pros-methylhistidine. Positions Lys-764–Gly-778 are actin-binding. One can recognise an IQ domain in the interval Leu-788–Ser-817. Residues Leu-846–Glu-1942 adopt a coiled-coil conformation. Residues Ser-1095, Ser-1099, Ser-1165, Ser-1240, and Ser-1246 each carry the phosphoserine modification. The interval Arg-1156–Glu-1175 is disordered. Residue Thr-1258 is modified to Phosphothreonine. Ser-1264 is subject to Phosphoserine. Thr-1268 and Thr-1289 each carry phosphothreonine. Phosphoserine occurs at positions 1291, 1295, 1306, and 1309. Residue Tyr-1467 is modified to Phosphotyrosine. A Phosphothreonine modification is found at Thr-1470. Phosphoserine is present on Ser-1477. Phosphotyrosine is present on Tyr-1495. The residue at position 1498 (Ser-1498) is a Phosphoserine. Thr-1504 carries the post-translational modification Phosphothreonine. Ser-1517 carries the phosphoserine modification. Thr-1520 bears the Phosphothreonine mark. Phosphoserine is present on residues Ser-1545, Ser-1557, Ser-1577, Ser-1603, Ser-1606, Ser-1717, and Ser-1729. Residues Thr-1733 and Thr-1739 each carry the phosphothreonine modification. Phosphoserine is present on Ser-1742.

It belongs to the TRAFAC class myosin-kinesin ATPase superfamily. Myosin family. Muscle myosin is a hexameric protein that consists of 2 heavy chain subunits (MHC), 2 alkali light chain subunits (MLC) and 2 regulatory light chain subunits (MLC-2). Interacts with SLC26A5. Expressed in the cochlea (at protein level). Strongly expressed in spiral ganglion neurons with axonal sprouts and supporting cells around hair cells. In the organ of Corti, it is expressed in inner and outer hair cells, and in supporting cells.

The protein localises to the cytoplasm. The protein resides in the myofibril. In terms of biological role, required for normal hearing. It plays a role in cochlear amplification of auditory stimuli, likely through the positive regulation of prestin (SLC26A5) activity and outer hair cell (OHC) electromotility. The sequence is that of Myosin-1 from Mus musculus (Mouse).